A 488-amino-acid chain; its full sequence is Malonate-semialdehyde dehydrogenase (488 aa).

The NAD(+) site is built by Ala150, Phe152, Lys176, Glu179, Arg180, Ser229, and Thr251. Cys284 serves as the catalytic Nucleophile. Residue Glu382 participates in NAD(+) binding.

The protein belongs to the aldehyde dehydrogenase family. IolA subfamily. In terms of assembly, homotetramer.

The enzyme catalyses 3-oxopropanoate + NAD(+) + CoA + H2O = hydrogencarbonate + acetyl-CoA + NADH + H(+). It carries out the reaction 2-methyl-3-oxopropanoate + NAD(+) + CoA + H2O = propanoyl-CoA + hydrogencarbonate + NADH + H(+). The protein operates within polyol metabolism; myo-inositol degradation into acetyl-CoA; acetyl-CoA from myo-inositol: step 7/7. Its function is as follows. Catalyzes the oxidation of malonate semialdehyde (MSA) and methylmalonate semialdehyde (MMSA) into acetyl-CoA and propanoyl-CoA, respectively. Is involved in a myo-inositol catabolic pathway. Bicarbonate, and not CO2, is the end-product of the enzymatic reaction. The protein is Malonate-semialdehyde dehydrogenase of Listeria monocytogenes serotype 4b (strain CLIP80459).